A 369-amino-acid chain; its full sequence is Glutamate 5-kinase (369 aa).

Residue Lys9 coordinates ATP. The substrate site is built by Ser49, Asp136, and Asn148. ATP is bound by residues 168-169 (TD) and 210-216 (TGGMLTK). The PUA domain maps to 275 to 355 (RGSVYVDEGA…KGVFIHRDDW (81 aa)).

The protein belongs to the glutamate 5-kinase family.

It localises to the cytoplasm. The enzyme catalyses L-glutamate + ATP = L-glutamyl 5-phosphate + ADP. It functions in the pathway amino-acid biosynthesis; L-proline biosynthesis; L-glutamate 5-semialdehyde from L-glutamate: step 1/2. Functionally, catalyzes the transfer of a phosphate group to glutamate to form L-glutamate 5-phosphate. In Neisseria meningitidis serogroup C / serotype 2a (strain ATCC 700532 / DSM 15464 / FAM18), this protein is Glutamate 5-kinase.